A 428-amino-acid chain; its full sequence is MNYLFKNGRYMNEEGKIVATDLLVQDGKIAKVAENITADNAEVIDVNGKLIAPGLVDVHVHLREPGGEHKETIETGTLAAAKGGFTTICAMPNTRPVPDCREHMEDLQNRIKEKAHVNVLPYGAITVRQAGSEMTDFETLKELGAFAFTDDGVGVQDASMMLAAMKRAAKLNMAVVAHCEENTLINKGCVHEGKFSEKHGLNGIPSVCESVHIARDILLAEAADCHYHVCHVSTKGSVRVIRDAKRAGIKVTAEVTPHHLVLCEDDIPSADPNFKMNPPLRGKEDHAALIEGLLDGTIDMIATDHAPHTAEEKAQGIERAPFGITGFETAFPLLYTNLVKKGIITLEQLIQFLTEKPADTFGLEAGRLKEGRAADITIIDLEQEEEIDPTTFLSKGKNTPFAGWKCQGWPVMTIVGGKIAWQKESALV.

The Zn(2+) site is built by His-59 and His-61. Substrate contacts are provided by residues 61–63 (HLR) and Asn-93. Residues Asp-151, His-178, and His-231 each coordinate Zn(2+). Asn-277 serves as a coordination point for substrate. Residue Asp-304 participates in Zn(2+) binding. Asp-304 is an active-site residue. Substrate is bound by residues His-308 and 322–323 (FG).

It belongs to the metallo-dependent hydrolases superfamily. DHOase family. Class I DHOase subfamily. It depends on Zn(2+) as a cofactor.

The catalysed reaction is (S)-dihydroorotate + H2O = N-carbamoyl-L-aspartate + H(+). The protein operates within pyrimidine metabolism; UMP biosynthesis via de novo pathway; (S)-dihydroorotate from bicarbonate: step 3/3. In terms of biological role, catalyzes the reversible cyclization of carbamoyl aspartate to dihydroorotate. The protein is Dihydroorotase of Bacillus cereus (strain ATCC 10987 / NRS 248).